A 598-amino-acid polypeptide reads, in one-letter code: 2-succinyl-5-enolpyruvyl-6-hydroxy-3-cyclohexene-1-carboxylate synthase (598 aa).

This sequence belongs to the TPP enzyme family. MenD subfamily. As to quaternary structure, homodimer. Mg(2+) serves as cofactor. It depends on Mn(2+) as a cofactor. Thiamine diphosphate is required as a cofactor.

It catalyses the reaction isochorismate + 2-oxoglutarate + H(+) = 5-enolpyruvoyl-6-hydroxy-2-succinyl-cyclohex-3-ene-1-carboxylate + CO2. It functions in the pathway quinol/quinone metabolism; 1,4-dihydroxy-2-naphthoate biosynthesis; 1,4-dihydroxy-2-naphthoate from chorismate: step 2/7. It participates in cofactor biosynthesis; phylloquinone biosynthesis. Catalyzes the thiamine diphosphate-dependent decarboxylation of 2-oxoglutarate and the subsequent addition of the resulting succinic semialdehyde-thiamine pyrophosphate anion to isochorismate to yield 2-succinyl-5-enolpyruvyl-6-hydroxy-3-cyclohexene-1-carboxylate (SEPHCHC). This Prochlorococcus marinus (strain NATL2A) protein is 2-succinyl-5-enolpyruvyl-6-hydroxy-3-cyclohexene-1-carboxylate synthase.